The chain runs to 251 residues: Indole-3-glycerol phosphate synthase (251 aa).

Residues 1 to 12 (MDDSSSLASPVQ) are compositionally biased toward polar residues. Residues 1–27 (MDDSSSLASPVQSILAAARRRDPPTRR) are disordered.

It belongs to the TrpC family.

The catalysed reaction is 1-(2-carboxyphenylamino)-1-deoxy-D-ribulose 5-phosphate + H(+) = (1S,2R)-1-C-(indol-3-yl)glycerol 3-phosphate + CO2 + H2O. Its pathway is amino-acid biosynthesis; L-tryptophan biosynthesis; L-tryptophan from chorismate: step 4/5. In Halobacterium salinarum (strain ATCC 700922 / JCM 11081 / NRC-1) (Halobacterium halobium), this protein is Indole-3-glycerol phosphate synthase.